We begin with the raw amino-acid sequence, 382 residues long: UBP1-associated proteins 1B (382 aa).

Residues 1–99 (MAKEGEERKK…SDESEEIVDS (99 aa)) are disordered. A compositionally biased stretch (basic residues) spans 10 to 22 (KEKKEKKERKERK). Residues 23–34 (RREAEELAVREK) show a composition bias toward basic and acidic residues. The RRM domain maps to 163–248 (RNIFVRGLGW…RPFNSGKPRE (86 aa)).

It localises to the nucleus. Its function is as follows. Acts as a component of a complex regulating the turnover of mRNAs in the nucleus. Binds with high affinity to RNA molecules that contain U-rich sequences in 3'-UTRs. May function in complex with UBP1 and contribute to the stabilization of mRNAs in the nucleus. The polypeptide is UBP1-associated proteins 1B (UBA1B) (Arabidopsis thaliana (Mouse-ear cress)).